The sequence spans 485 residues: Glutamate--tRNA ligase 1 (485 aa).

A 'HIGH' region motif is present at residues 10 to 20 (PSPTGAIHIGN). Residues 252 to 256 (KLSKR) carry the 'KMSKS' region motif. Residue lysine 255 participates in ATP binding.

This sequence belongs to the class-I aminoacyl-tRNA synthetase family. Glutamate--tRNA ligase type 1 subfamily. As to quaternary structure, monomer.

It localises to the cytoplasm. The enzyme catalyses tRNA(Glu) + L-glutamate + ATP = L-glutamyl-tRNA(Glu) + AMP + diphosphate. In terms of biological role, catalyzes the attachment of glutamate to tRNA(Glu) in a two-step reaction: glutamate is first activated by ATP to form Glu-AMP and then transferred to the acceptor end of tRNA(Glu). The protein is Glutamate--tRNA ligase 1 of Thermoanaerobacter pseudethanolicus (strain ATCC 33223 / 39E) (Clostridium thermohydrosulfuricum).